The primary structure comprises 359 residues: 4-galactosyl-N-acetylglucosaminide 3-alpha-L-fucosyltransferase FUT6 (359 aa).

Topologically, residues 1–14 (MDPLGPAKTQWSWR) are cytoplasmic. A helical; Signal-anchor for type II membrane protein membrane pass occupies residues 15–34 (CCLTALLFQLLVAVCFFSYL). Residues 35 to 359 (RVSRDDPTVY…QTRSIAAWFT (325 aa)) lie on the Lumenal side of the membrane. A determines site-specific fucosylation region spans residues 73–112 (KPIALPRCSEMVPGTADCNITADRKVYPQADAVIVHHREV). N-linked (GlcNAc...) asparagine glycans are attached at residues Asn91, Asn153, and Asn184.

It belongs to the glycosyltransferase 10 family. In terms of assembly, homodimer and monomer. Monomer (secreted form). N-glycosylated. Post-translationally, proteolytic cleavage releases a secreted glycoform of 43 kDa.

It is found in the golgi apparatus. The protein resides in the golgi stack membrane. The protein localises to the secreted. It catalyses the reaction a beta-D-galactosyl-(1-&gt;4)-N-acetyl-beta-D-glucosaminyl derivative + GDP-beta-L-fucose = a beta-D-galactosyl-(1-&gt;4)-[alpha-L-fucosyl-(1-&gt;3)]-N-acetyl-beta-D-glucosaminyl derivative + GDP + H(+). The enzyme catalyses an N-acetyl-alpha-neuraminyl-(2-&gt;3)-beta-D-galactosyl-(1-&gt;4)-N-acetyl-beta-D-glucosaminyl derivative + GDP-beta-L-fucose = an alpha-Neu5Ac-(2-&gt;3)-beta-D-Gal-(1-&gt;4)-[alpha-L-Fuc-(1-&gt;3)]-beta-D-GlcNAc derivative + GDP + H(+). It carries out the reaction an alpha-Neu5Ac-(2-&gt;3)-beta-D-Gal-(1-&gt;4)-beta-D-GlcNAc-(1-&gt;3)-beta-D-Gal-(1-&gt;4)-[alpha-L-Fuc-(1-&gt;3)]-beta-D-GlcNAc derivative + GDP-beta-L-fucose = an alpha-Neu5Ac-(2-&gt;3)-beta-D-Gal-(1-&gt;4)-[alpha-L-Fuc-(1-&gt;3)]-beta-D-GlcNAc-(1-&gt;3)-beta-D-Gal-(1-&gt;4)-[alpha-L-Fuc-(1-&gt;3)]-beta-D-GlcNAc derivative + GDP + H(+). The catalysed reaction is a neolactoside nLc6Cer + GDP-beta-L-fucose = beta-D-Gal-(1-&gt;4)-[alpha-L-Fuc-(1-&gt;3)]-beta-D-GlcNAc-(1-&gt;3)-beta-D-Gal-(1-&gt;4)-beta-D-GlcNAc-(1-&gt;3)-beta-D-Gal-(1-&gt;4)-beta-D-Glc-(1&lt;-&gt;1')-Cer + GDP + H(+). It catalyses the reaction a neolactoside nLc6Cer + GDP-beta-L-fucose = beta-D-galactosyl-(1-&gt;4)-N-acetyl-beta-D-glucosaminyl-(1-&gt;3)-beta-D-galactosyl-(1-&gt;4)-[alpha-L-fucosyl-(1-&gt;3)]-N-acetyl-beta-D-glucosaminyl-(1-&gt;3)-beta-D-galactosyl-(1-&gt;4)-beta-D-glucosyl-(1&lt;-&gt;1')-ceramide + GDP + H(+). The enzyme catalyses a neolactoside VI(3)-alpha-NeuNAc-nLc6Cer + GDP-beta-L-fucose = a neolactoside VI(3)-alpha-NeuAc,V(3)-alphaFuc-nLc6Cer + GDP + H(+). It carries out the reaction beta-D-galactosyl-(1-&gt;4)-N-acetyl-D-glucosamine + GDP-beta-L-fucose = beta-D-galactosyl-(1-&gt;4)-[alpha-L-fucosyl-(1-&gt;3)]-N-acetyl-D-glucosamine + GDP + H(+). The catalysed reaction is N-acetyl-alpha-neuraminosyl-(2-&gt;3)-beta-D-galactosyl-(1-&gt;4)-N-acetyl-beta-D-glucosamine + GDP-beta-L-fucose = N-acetyl-alpha-neuraminosyl-(2-&gt;3)-beta-D-galactosyl-(1-&gt;4)-[alpha-L-fucosyl-(1-&gt;3)]-N-acetyl-beta-D-glucosamine + GDP + H(+). It catalyses the reaction lactose + GDP-beta-L-fucose = beta-D-galactosyl-(1-&gt;4)-[alpha-L-fucosyl-(1-&gt;3)]-D-glucose + GDP + H(+). The enzyme catalyses alpha-L-Fuc-(1-&gt;2)-beta-D-Gal-(1-&gt;4)-D-Glc + GDP-beta-L-fucose = alpha-L-Fuc-(1-&gt;2)-beta-D-Gal-(1-&gt;4)-[alpha-L-Fuc-(1-&gt;3)]-D-Glc + GDP + H(+). It carries out the reaction a beta-D-galactosyl-(1-&gt;4)-N-acetyl-beta-D-6-sulfooxy-glucosaminyl derivative + GDP-beta-L-fucose = a beta-D-galactosyl-(1-&gt;4)-[alpha-L-fucosyl-(1-&gt;3)]-N-acetyl-beta-D-6-sulfooxy-glucosaminyl derivative + GDP + H(+). It functions in the pathway protein modification; protein glycosylation. In terms of biological role, catalyzes the transfer of L-fucose, from a guanosine diphosphate-beta-L-fucose, to the N-acetyl glucosamine (GlcNAc) of a distal alpha2,3 sialylated lactosamine unit of a glycoprotein- or glycolipid-linked sialopolylactosamines chain or of a distal or internal lactosamine unit of a neutral glycoprotein- or glycolipid-linked polylactosamines chain through an alpha-1,3 glycosidic linkage and participates in surface expression of the sialyl Lewis X (sLe(x)), Lewis X (Le(x)) and non sialylated VIM2 determinants. Moreover transfers fucose to H-type 2 (Fucalpha1-2Galbeta1-4GlcNAc) chain acceptor substrates and participates in difucosylated sialyl Lewis x determinants. Also fucosylates a polylactosamine substrate having a 6 sulfate modification at the GlcNAc moiety and gives rise to sialyl and non-sialyl 6-sulfo lewis X. Does not have activity towards type 1 ((Galbeta1-3GlcNAc)) and H-type 1 chain (Fucalpha1-2Galbeta1-3GlcNAc) acceptors substrates. The polypeptide is 4-galactosyl-N-acetylglucosaminide 3-alpha-L-fucosyltransferase FUT6 (Pongo pygmaeus (Bornean orangutan)).